The primary structure comprises 380 residues: Cytochrome b (380 aa).

Helical transmembrane passes span 34-54, 78-99, 114-134, and 179-199; these read FGSLLAVCFMTQIITGLLLAM, WLIRNLHANGASFFFICIYLHI, WNTGVILLLTLMATAFVGYVL, and FFALHFLLPFVIAGITIIHLT. Heme b is bound by residues His-84 and His-98. Heme b-binding residues include His-183 and His-197. His-202 is an a ubiquinone binding site. The next 4 membrane-spanning stretches (helical) occupy residues 227–247, 289–309, 321–341, and 348–368; these read IKDILGLTLMLTPLLTLALFS, LGGVLALAASVLILLLIPFLH, FSQLLFWLLVANLLILTWVGS, and FIIIGQLASLSYFTTLLILFP.

This sequence belongs to the cytochrome b family. The cytochrome bc1 complex contains 11 subunits: 3 respiratory subunits (MT-CYB, CYC1 and UQCRFS1), 2 core proteins (UQCRC1 and UQCRC2) and 6 low-molecular weight proteins (UQCRH/QCR6, UQCRB/QCR7, UQCRQ/QCR8, UQCR10/QCR9, UQCR11/QCR10 and a cleavage product of UQCRFS1). This cytochrome bc1 complex then forms a dimer. Heme b serves as cofactor.

It localises to the mitochondrion inner membrane. Functionally, component of the ubiquinol-cytochrome c reductase complex (complex III or cytochrome b-c1 complex) that is part of the mitochondrial respiratory chain. The b-c1 complex mediates electron transfer from ubiquinol to cytochrome c. Contributes to the generation of a proton gradient across the mitochondrial membrane that is then used for ATP synthesis. The chain is Cytochrome b (MT-CYB) from Numida meleagris (Helmeted guineafowl).